A 102-amino-acid polypeptide reads, in one-letter code: NADH-quinone oxidoreductase subunit K (102 aa).

3 helical membrane-spanning segments follow: residues 6-26 (LEHG…GLMV), 30-50 (ILFV…AFVV), and 62-82 (VMFI…LAIL).

This sequence belongs to the complex I subunit 4L family. NDH-1 is composed of 13 different subunits. Subunits NuoA, H, J, K, L, M, N constitute the membrane sector of the complex.

The protein localises to the cell inner membrane. The catalysed reaction is a quinone + NADH + 5 H(+)(in) = a quinol + NAD(+) + 4 H(+)(out). Functionally, NDH-1 shuttles electrons from NADH, via FMN and iron-sulfur (Fe-S) centers, to quinones in the respiratory chain. The immediate electron acceptor for the enzyme in this species is believed to be ubiquinone. Couples the redox reaction to proton translocation (for every two electrons transferred, four hydrogen ions are translocated across the cytoplasmic membrane), and thus conserves the redox energy in a proton gradient. This Pseudomonas aeruginosa (strain LESB58) protein is NADH-quinone oxidoreductase subunit K.